The sequence spans 390 residues: Glucose-fructose oxidoreductase domain-containing protein 1 (390 aa).

A signal peptide spans 1–21 (MLPGVGVFGTSLTARVIIPLL).

The protein belongs to the Gfo/Idh/MocA family. In terms of assembly, homodimer. Interacts with NKIRAS2.

The protein localises to the secreted. In terms of biological role, probably catalytically inactive enzyme. Does not bind NAD or NADP. This is Glucose-fructose oxidoreductase domain-containing protein 1 (Gfod1) from Mus musculus (Mouse).